A 1466-amino-acid polypeptide reads, in one-letter code: MSDDYELKELQPPEGANCNYNINTPQYENNNNNNNNTSGNESPNILNSENQFNQVANELENDSKQFFSNQDPEMNVEHSNVAQNEQDFKLRSYFENSQRIALGNGQKPKKMGISIRNLTVVGKGADISVISDLSTPFVTIFNLFRPSTWRKSSGSTFDILHDVTLFNRDAEMLLVLGRPGAGCSTLLRVISNQRSSYVSVSGDVTYGGINSDEWKNFKGESIYTPEEDTHHPTLTVRETLNFALKCKTIHNRLPDEKKKTFRKKIYDLLVGMFGISKQSDTLVGNEFIRGLSGGERKRLTITEAMVSSASITCYDCSTRGLDAASALDYAKSIRIMSDTLHKTTIASFYQASDSIFNLFNNVAILEKGRLIYFGPVGLAKQYFLDLGFDCEPRKSTPDFLTGVTNPQERKVRPGFEGRAPETSSDFEKAWKSSDLYQVMLQQQLEYEKKIELEQPSTNFIEQIRNENSKTNPTKSIYTTSYFTQVRALIARNSQIIWGDRFALISKYISIIVQTFVYASLFYNMKSDVTGLFNRGGAIYAAILFNAFVSAGELGLTFYGRRILQKQHSYAMYRPSALHIAMVITDIPLTAIQVTIFSVIVYFMYGLQVDAGKFFIFLFTIFGSTLSMVAFFRALGNLSPSLYVSQNILNVFILFMFTYGGYSIPKNKMHPWFSWYFWINPFSFPYKALMANEFGDMNFTCNDQTAIPNGNYIASNGSTMSYQDQYRACPSAGAIEGQMVNGEFYVAGSNYIDAALDFKSDDRTLNVIITFLWWIFFVIINMIALELFDWTSGGMPHKVYKRGKAPKINDDEEERQQNAMVENATSKMKDTLKMRESCFTWNHIHYTVQLNGKDLLLLNDVEGWIKPGQMTALMGSSGAGKTTLLDVLAKRKTMGTVTGKCLLNGKELNIDFERITGYVEQMDVHNPGLTVREALRFSAKLRQEPTVSLQDKYEYVEQVLEMMEMKHLGDALIGSLETGIGISVEERKRLTIGIELVAKPHILFLDEPTSGLDSQSSYNIVKFIRKLADAGMPLVCTIHQPSSVLFEYFDRILLLAKGGKTVYYGDIGEKSKTLTSYFERNGVRSCTESENPAEYILEAIGAGTNPGVSTIDWPEVWKQSPELQDVQAELASLETAATVQISSDDQDHGPPREFATSIWYQTWEVYKRLNLIWWRDMSYVYGIFTQAAASGLIIGFTFWNLDLSSSDMNQRVFFIFEILFLGILYIFIAIPQFLIQKAYFKKDYASKFYSWCPFAISIVIVELPFVAVAGTICFFCSFWTAGIYYNGEYDFYFYITFILFLFICVSLGQVVSAFCFNVMLAQTILPLLLVMLFLFCGVLVPYEQIPNFWKFVYHSNPCRYFLEGVVTSVLKNVFVDCSNEDLTKFSNPTNLTCKEYFKPTYGNVRAVTKGDESECGYCVFKSGEEYYKTLGWSYENRLRNYGILWAFFIFNIIMVVSFVYLTKKPNR.

The segment covering 23 to 45 (NTPQYENNNNNNNNTSGNESPNI) has biased composition (low complexity). The segment at 23-47 (NTPQYENNNNNNNNTSGNESPNILN) is disordered. The 255-residue stretch at 138–392 (VTIFNLFRPS…FLDLGFDCEP (255 aa)) folds into the ABC transporter 1 domain. In terms of domain architecture, ABC transmembrane type-2 1 spans 497 to 724 (WGDRFALISK…NGSTMSYQDQ (228 aa)). A run of 6 helical transmembrane segments spans residues 501-521 (FALI…ASLF), 537-557 (AIYA…GLTF), 586-606 (IPLT…MYGL), 611-631 (GKFF…VAFF), 641-661 (LYVS…YGGY), and 767-787 (IITF…LELF). The 245-residue stretch at 838 to 1082 (FTWNHIHYTV…LTSYFERNGV (245 aa)) folds into the ABC transporter 2 domain. 874–881 (GSSGAGKT) serves as a coordination point for ATP. The region spanning 1177 to 1399 (SYVYGIFTQA…LTCKEYFKPT (223 aa)) is the ABC transmembrane type-2 2 domain. The next 6 helical transmembrane spans lie at 1178–1198 (YVYG…FTFW), 1214–1234 (IFEI…QFLI), 1253–1273 (FAIS…TICF), 1290–1310 (FYFY…GQVV), 1319–1339 (LAQT…GVLV), and 1440–1460 (YGIL…FVYL).

It belongs to the ABC transporter superfamily. ABCG family. PDR (TC 3.A.1.205) subfamily.

It localises to the membrane. This chain is ABC transporter G family member 10 (abcG10), found in Dictyostelium discoideum (Social amoeba).